Reading from the N-terminus, the 256-residue chain is 5-keto-4-deoxy-D-glucarate aldolase (256 aa).

H50 serves as the catalytic Proton acceptor. Residue Q151 coordinates substrate. E153 provides a ligand contact to Mg(2+). Substrate contacts are provided by S178 and D179. D179 contributes to the Mg(2+) binding site.

Belongs to the HpcH/HpaI aldolase family. KDGluc aldolase subfamily. Homohexamer; trimer of dimers. The cofactor is Mg(2+).

The enzyme catalyses 5-dehydro-4-deoxy-D-glucarate = 2-hydroxy-3-oxopropanoate + pyruvate. The catalysed reaction is 2-dehydro-3-deoxy-D-glucarate = 2-hydroxy-3-oxopropanoate + pyruvate. Its pathway is carbohydrate acid metabolism; galactarate degradation; D-glycerate from galactarate: step 2/3. In terms of biological role, catalyzes the reversible retro-aldol cleavage of both 5-keto-4-deoxy-D-glucarate and 2-keto-3-deoxy-D-glucarate to pyruvate and tartronic semialdehyde. The protein is 5-keto-4-deoxy-D-glucarate aldolase of Shigella dysenteriae serotype 1 (strain Sd197).